We begin with the raw amino-acid sequence, 536 residues long: NSSRTSSAASDLHGEDMIVTPFAQVLASLRTVRSNVAALAHGAGSATRQALLGTPPQSSQQAAPAEESGLQLAQETLEELDWCLEQLETLQTRRSVGEMASNKFKRMLNRELTHLSETSRSGNQVSEYISQTFLDQQAEVELPAPPTEDHPWPMAQITGLRKSCHTSLPTAAIPRFGVQTDQEEQLAKELEDTNKWGLDVFKVAELSGNRPLTAVIFRVLQERDLLKTFQIPADTLLRYLLTLEGHYHSNVAYHNSIHAADVVQSAHVLLGTPALEAVFTDLEVLAAIFACAIHDVDHPGVSNQFLINTNSELALMYNDSSVLENHHLAVGFKLLQGENCDIFQNLSTKQKLSLRRMVIDMVLATDMSKHMSLLADLKTMVETKKVTSLGVLLLDNYSDRIQVLQSLVHCADLSNPAKPLPLYRQWTERIMAEFFQQGDRERESGLDISPMCDKHTASVEKSQVGFIDYIAHPLWETWADLVHPDAQELLDTLEDNREWYQSRVPCSPPHAIGPDRFKFELTLEETEEEEEEDERH.

The tract at residues 49–69 is disordered; it reads QALLGTPPQSSQQAAPAEESG. A PDEase domain is found at 178–507; it reads VQTDQEEQLA…EWYQSRVPCS (330 aa). His-254 serves as the catalytic Proton donor. His-254 provides a ligand contact to 3',5'-cyclic AMP. AMP is bound by residues His-254 and His-258. Zn(2+)-binding residues include His-258, His-294, Asp-295, and Asp-412. The AMP site is built by Asp-295, Asp-412, Gln-463, and Phe-466. Asp-295 contributes to the Mg(2+) binding site. Residue Asp-295 coordinates Mn(2+). 3',5'-cyclic AMP-binding residues include Gln-463 and Phe-466. Ser-507 carries the phosphoserine modification.

Belongs to the cyclic nucleotide phosphodiesterase family. PDE4 subfamily. In terms of assembly, part of a complex containing AKAP5, ADCY5, ADCY6 and PKD2. The cofactor is Zn(2+). It depends on Mg(2+) as a cofactor. Mn(2+) is required as a cofactor.

It is found in the cell projection. The protein resides in the cilium. The enzyme catalyses 3',5'-cyclic AMP + H2O = AMP + H(+). It participates in purine metabolism; 3',5'-cyclic AMP degradation; AMP from 3',5'-cyclic AMP: step 1/1. Functionally, hydrolyzes the second messenger cAMP, which is a key regulator of many important physiological processes. The sequence is that of 3',5'-cyclic-AMP phosphodiesterase 4C from Rattus norvegicus (Rat).